The following is a 169-amino-acid chain: Sec-independent protein translocase protein TatB (169 aa).

The helical transmembrane segment at 2-22 threads the bilayer; the sequence is SPGIGMPELLVVLVLALVVVG. The disordered stretch occupies residues 106-169; the sequence is NQAETDADKA…AKPVDEIKGR (64 aa).

It belongs to the TatB family. The Tat system comprises two distinct complexes: a TatABC complex, containing multiple copies of TatA, TatB and TatC subunits, and a separate TatA complex, containing only TatA subunits. Substrates initially bind to the TatABC complex, which probably triggers association of the separate TatA complex to form the active translocon.

The protein localises to the cell inner membrane. Functionally, part of the twin-arginine translocation (Tat) system that transports large folded proteins containing a characteristic twin-arginine motif in their signal peptide across membranes. Together with TatC, TatB is part of a receptor directly interacting with Tat signal peptides. TatB may form an oligomeric binding site that transiently accommodates folded Tat precursor proteins before their translocation. This is Sec-independent protein translocase protein TatB from Maricaulis maris (strain MCS10) (Caulobacter maris).